Here is a 295-residue protein sequence, read N- to C-terminus: MAITAQMVKELREKTGAGMMDCKKALTETNGDMEKAIDFLREKGIAKAAKKADRIAAEGLTFIETNGNDGLILELNSETDFVAKNEGFQTLIKELAAHLLANKPANVEEAMAQTMENGKKVEEHINEAIAKIGEKLTLRRFEIVSKTDADAFGAYLHMGGRIGVLTVLEGSTDEAAAKDVAMHIAAVNPKYIDRDAVTAEEVEHERQVLTQQALNEGKPEKIVAKMVEGRLGKFFEEICLLDQAFVKNPDMKVRQFVESKGGTLKGFVRYAVGEGIEKREDNFAEEVMNQVKGSN.

Residues 79-82 (TDFV) form an involved in Mg(2+) ion dislocation from EF-Tu region.

Belongs to the EF-Ts family.

Its subcellular location is the cytoplasm. Functionally, associates with the EF-Tu.GDP complex and induces the exchange of GDP to GTP. It remains bound to the aminoacyl-tRNA.EF-Tu.GTP complex up to the GTP hydrolysis stage on the ribosome. The sequence is that of Elongation factor Ts from Bacillus anthracis (strain A0248).